Reading from the N-terminus, the 189-residue chain is Elongation factor P (189 aa).

The protein belongs to the elongation factor P family.

It is found in the cytoplasm. The protein operates within protein biosynthesis; polypeptide chain elongation. Functionally, involved in peptide bond synthesis. Stimulates efficient translation and peptide-bond synthesis on native or reconstituted 70S ribosomes in vitro. Probably functions indirectly by altering the affinity of the ribosome for aminoacyl-tRNA, thus increasing their reactivity as acceptors for peptidyl transferase. This is Elongation factor P from Rhizobium johnstonii (strain DSM 114642 / LMG 32736 / 3841) (Rhizobium leguminosarum bv. viciae).